Reading from the N-terminus, the 154-residue chain is MSELCPCGSILNYHECCGPYILGTQVAAKPAILMRSRYCAYVEKNVDYLIATWHPDCHAQEWRESIIQGFTKTVWHGLTVIAETPGRHPDEAFVEFISRFTDADNAQITAMHERSRFLRIKEHWYYIDGIRPSLGRNDTCLCGSGKKHKKCCGR.

It belongs to the UPF0225 family.

The chain is UPF0225 protein YPTB2098 from Yersinia pseudotuberculosis serotype I (strain IP32953).